A 258-amino-acid chain; its full sequence is Snake venom serine protease 5 (258 aa).

An N-terminal signal peptide occupies residues 1–18 (MVLIRVLANLLILQLSYA). Positions 19 to 24 (QKSSEL) are excised as a propeptide. One can recognise a Peptidase S1 domain in the interval 25 to 249 (VVGGRPCNIN…HLDWIQNIIA (225 aa)). 6 disulfides stabilise this stretch: cysteine 31-cysteine 163, cysteine 50-cysteine 66, cysteine 98-cysteine 256, cysteine 142-cysteine 210, cysteine 174-cysteine 189, and cysteine 200-cysteine 225. The N-linked (GlcNAc...) asparagine glycan is linked to asparagine 44. Catalysis depends on histidine 65, which acts as the Charge relay system. Asparagine 103 carries N-linked (GlcNAc...) asparagine glycosylation. The active-site Charge relay system is aspartate 110. N-linked (GlcNAc...) asparagine glycans are attached at residues asparagine 121, asparagine 122, asparagine 154, and asparagine 170. Catalysis depends on serine 204, which acts as the Charge relay system. An N-linked (GlcNAc...) asparagine glycan is attached at asparagine 251.

This sequence belongs to the peptidase S1 family. Snake venom subfamily. Monomer. As to expression, expressed by the venom gland.

It localises to the secreted. Functionally, snake venom serine protease that may act in the hemostasis system of the prey. This chain is Snake venom serine protease 5, found in Trimeresurus stejnegeri (Chinese green tree viper).